Consider the following 263-residue polypeptide: Endonuclease 8 (263 aa).

Proline 2 functions as the Schiff-base intermediate with DNA in the catalytic mechanism. Residue glutamate 3 is the Proton donor of the active site. Lysine 53 functions as the Proton donor; for beta-elimination activity in the catalytic mechanism. 3 residues coordinate DNA: glutamine 70, arginine 125, and asparagine 169. The FPG-type zinc finger occupies 229–263 (KVFHRDGELCERCGGIIEKTTLSSRPFYWCPGCQH). The Proton donor; for delta-elimination activity role is filled by arginine 253.

It belongs to the FPG family. It depends on Zn(2+) as a cofactor.

It carries out the reaction 2'-deoxyribonucleotide-(2'-deoxyribose 5'-phosphate)-2'-deoxyribonucleotide-DNA = a 3'-end 2'-deoxyribonucleotide-(2,3-dehydro-2,3-deoxyribose 5'-phosphate)-DNA + a 5'-end 5'-phospho-2'-deoxyribonucleoside-DNA + H(+). Functionally, involved in base excision repair of DNA damaged by oxidation or by mutagenic agents. Acts as a DNA glycosylase that recognizes and removes damaged bases. Has a preference for oxidized pyrimidines, such as thymine glycol, 5,6-dihydrouracil and 5,6-dihydrothymine. Has AP (apurinic/apyrimidinic) lyase activity and introduces nicks in the DNA strand. Cleaves the DNA backbone by beta-delta elimination to generate a single-strand break at the site of the removed base with both 3'- and 5'-phosphates. The sequence is that of Endonuclease 8 from Shigella dysenteriae serotype 1 (strain Sd197).